The primary structure comprises 199 residues: Ribonuclease P protein subunit p25 (199 aa).

Basic and acidic residues predominate over residues 1–11 (MENFRKVRSEE). Disordered regions lie at residues 1–28 (MENFRKVRSEEAPAGCGAEGGGPGSGPF) and 144–199 (LDPR…DQTA). Residues 151–166 (YQPPNPHPGPSSPPAA) show a composition bias toward pro residues. 2 positions are modified to phosphoserine: Ser-172 and Ser-182.

The protein belongs to the histone-like Alba family. Component of nuclear RNase P and RNase MRP ribonucleoproteins. RNase P consists of a catalytic RNA moiety and 10 different protein chains; POP1, POP4, POP5, POP7, RPP14, RPP21, RPP25, RPP30, RPP38 and RPP40. Within the RNase P complex, POP1, POP7 and RPP25 form the 'finger' subcomplex, POP5, RPP14, RPP40 and homodimeric RPP30 form the 'palm' subcomplex, and RPP21, POP4 and RPP38 form the 'wrist' subcomplex. All subunits of the RNase P complex interact with the catalytic RNA. Several subunits of RNase P are also part of the RNase MRP complex. RNase MRP consists of a catalytic RNA moiety and about 8 protein subunits; POP1, POP7, RPP25, RPP30, RPP38, RPP40 and possibly also POP4 and POP5. POP7 forms a heterodimer with RPP25 that binds to the P3 stem loop of the catalytic RNA.

The protein resides in the nucleus. Its subcellular location is the nucleolus. Its function is as follows. Component of ribonuclease P, a ribonucleoprotein complex that generates mature tRNA molecules by cleaving their 5'-ends. Also a component of the MRP ribonuclease complex, which cleaves pre-rRNA sequences. The sequence is that of Ribonuclease P protein subunit p25 (RPP25) from Homo sapiens (Human).